The sequence spans 226 residues: Ribonuclease 3 (226 aa).

The RNase III domain maps to 2–129 (IESISKIIKY…LIGAIYLDGG (128 aa)). Residue Glu42 coordinates Mg(2+). The active site involves Asp46. Residues Asn115 and Glu118 each contribute to the Mg(2+) site. Glu118 is a catalytic residue. Positions 154-223 (DAKTILQELV…ASLMLNQIHN (70 aa)) constitute a DRBM domain.

Belongs to the ribonuclease III family. As to quaternary structure, homodimer. Mg(2+) is required as a cofactor.

It localises to the cytoplasm. It catalyses the reaction Endonucleolytic cleavage to 5'-phosphomonoester.. Functionally, digests double-stranded RNA. Involved in the processing of primary rRNA transcript to yield the immediate precursors to the large and small rRNAs (23S and 16S). Processes some mRNAs, and tRNAs when they are encoded in the rRNA operon. Processes pre-crRNA and tracrRNA of type II CRISPR loci if present in the organism. The sequence is that of Ribonuclease 3 from Ehrlichia chaffeensis (strain ATCC CRL-10679 / Arkansas).